The following is a 305-amino-acid chain: Aurora/IPL1-related protein kinase 2 (305 aa).

Residues Phe-30–Ile-280 enclose the Protein kinase domain. ATP contacts are provided by residues Leu-36–Val-44 and Lys-59. The active-site Proton acceptor is Asp-153.

The protein belongs to the protein kinase superfamily. Ser/Thr protein kinase family. Aurora subfamily. Component of the CPC complex which consists of icp-1; csc-1; bir-1 and air-2. Within the complex, interacts with icp-1; csc-1 and bir-1. Interacts with zen-4. Interacts with tlk-1 and bmk-1. Post-translationally, phosphorylated. Increased phosphorylation upon chromatin obstructions at anaphase.

Its subcellular location is the cytoplasm. The protein localises to the cytoskeleton. It is found in the chromosome. It localises to the midbody. The protein resides in the spindle. It catalyses the reaction L-seryl-[protein] + ATP = O-phospho-L-seryl-[protein] + ADP + H(+). It carries out the reaction L-threonyl-[protein] + ATP = O-phospho-L-threonyl-[protein] + ADP + H(+). Its function is as follows. Serine/threonine-protein kinase component of the chromosomal passenger complex (CPC), a complex that acts as a key regulator of chromosome segregation and cytokinesis. The CPC complex has essential functions at the centromere in ensuring correct chromosome alignment and segregation. Required for histone H3 phosphorylation during segregation of homologous chromosomes in meiosis and mitosis. Required for histone H3 'Ser-10' phosphorylation. Phosphorylates tlk-1 at 'Ser-634', which enhances its activity. Phosphorylates zen-4 at 'Ser-680'. Required for the recruitment of bub-1 to the ring-shaped domain between chromosomes during meiotic anaphase I. Also required for the localization of the condensin I complex subunit smc-4 to mitotic chromosomes. Acts at the spindle midzone and the midbody to prevent cleavage furrow regression upon chromatin obstructions during cytokinesis. The sequence is that of Aurora/IPL1-related protein kinase 2 from Caenorhabditis elegans.